Consider the following 379-residue polypeptide: Cathepsin B-like cysteine proteinase 6 (379 aa).

The first 16 residues, 1–16, serve as a signal peptide directing secretion; the sequence is MKTLLFLSCIVVAAYC. A propeptide spanning residues 17–104 is cleaved from the precursor; that stretch reads ACNDNLESVL…LSKTKDLDLD (88 aa). Intrachain disulfides connect C118–C147, C130–C174, C166–C233, C167–C170, C203–C237, and C211–C223. C133 is an active-site residue. N-linked (GlcNAc...) asparagine glycosylation occurs at N196. N201 carries N-linked (GlcNAc...) asparagine; atypical glycosylation. Residues H305 and N325 contribute to the active site.

The protein belongs to the peptidase C1 family.

The sequence is that of Cathepsin B-like cysteine proteinase 6 (cpr-6) from Caenorhabditis elegans.